The chain runs to 222 residues: Small ribosomal subunit protein uS3 (222 aa).

One can recognise a KH type-2 domain in the interval 39–107 (IRKYIKTKFY…QININIAEIK (69 aa)).

The protein belongs to the universal ribosomal protein uS3 family. In terms of assembly, part of the 30S ribosomal subunit. Forms a tight complex with proteins S10 and S14.

In terms of biological role, binds the lower part of the 30S subunit head. Binds mRNA in the 70S ribosome, positioning it for translation. This is Small ribosomal subunit protein uS3 from Carboxydothermus hydrogenoformans (strain ATCC BAA-161 / DSM 6008 / Z-2901).